Reading from the N-terminus, the 132-residue chain is Small ribosomal subunit protein uS11 (132 aa).

This sequence belongs to the universal ribosomal protein uS11 family. Part of the 30S ribosomal subunit. Interacts with proteins S7 and S18. Binds to IF-3.

Located on the platform of the 30S subunit, it bridges several disparate RNA helices of the 16S rRNA. Forms part of the Shine-Dalgarno cleft in the 70S ribosome. This chain is Small ribosomal subunit protein uS11, found in Cyanothece sp. (strain PCC 7425 / ATCC 29141).